The following is a 500-amino-acid chain: Glycerol kinase (500 aa).

T12 contacts ADP. The ATP site is built by T12, T13, and S14. T12 is a binding site for sn-glycerol 3-phosphate. An ADP-binding site is contributed by R16. Sn-glycerol 3-phosphate-binding residues include R82, E83, Y134, and D246. Residues R82, E83, Y134, D246, and Q247 each coordinate glycerol. Positions 268 and 312 each coordinate ADP. Residues T268, G312, Q316, and G413 each coordinate ATP. Positions 413 and 417 each coordinate ADP.

The protein belongs to the FGGY kinase family.

The catalysed reaction is glycerol + ATP = sn-glycerol 3-phosphate + ADP + H(+). The protein operates within polyol metabolism; glycerol degradation via glycerol kinase pathway; sn-glycerol 3-phosphate from glycerol: step 1/1. Inhibited by fructose 1,6-bisphosphate (FBP). Functionally, key enzyme in the regulation of glycerol uptake and metabolism. Catalyzes the phosphorylation of glycerol to yield sn-glycerol 3-phosphate. The sequence is that of Glycerol kinase from Saccharopolyspora erythraea (strain ATCC 11635 / DSM 40517 / JCM 4748 / NBRC 13426 / NCIMB 8594 / NRRL 2338).